Consider the following 430-residue polypeptide: Long-chain specific acyl-CoA dehydrogenase, mitochondrial (430 aa).

Residues 1 to 30 (MAARLLLRSLRVLKARSAPRPPPSARCSHS) constitute a mitochondrion transit peptide. The interval 17 to 39 (SAPRPPPSARCSHSGAEARLETP) is disordered. The residue at position 42 (lysine 42) is an N6-acetyllysine. 2 positions are modified to phosphoserine: serine 54 and serine 55. N6-acetyllysine; alternate occurs at positions 66 and 81. 2 positions are modified to N6-succinyllysine; alternate: lysine 66 and lysine 81. Lysine 92 and lysine 95 each carry N6-acetyllysine. Lysine 165 carries the post-translational modification N6-succinyllysine. Residue 170-179 (IAMTEPGAGS) coordinates FAD. Serine 179 contacts substrate. Serine 191 carries the post-translational modification Phosphoserine. Position 203-205 (203-205 (FIT)) interacts with FAD. A substrate-binding site is contributed by 227 to 228 (AH). The residue at position 240 (lysine 240) is an N6-succinyllysine. N6-acetyllysine; alternate occurs at positions 254 and 279. An N6-succinyllysine; alternate mark is found at lysine 254 and lysine 279. Substrate contacts are provided by residues tyrosine 282 and 289–292 (PQER). The active-site Proton acceptor is the glutamate 291. Arginine 317 lines the FAD pocket. Position 318 is an N6-acetyllysine (lysine 318). Lysine 322 is subject to N6-acetyllysine; alternate. Residue lysine 322 is modified to N6-succinyllysine; alternate. Glutamine 328 is a binding site for FAD. Lysine 358 carries the post-translational modification N6-acetyllysine. The residue at position 362 (serine 362) is a Phosphoserine. 385–389 (QLHGG) serves as a coordination point for FAD. Position 412–413 (412–413 (GG)) interacts with substrate. FAD is bound at residue 414 to 416 (TNE).

This sequence belongs to the acyl-CoA dehydrogenase family. As to quaternary structure, homotetramer. FAD is required as a cofactor. Acetylation at Lys-318 and Lys-322 in proximity of the cofactor-binding sites strongly reduces catalytic activity. These sites are deacetylated by SIRT3. In terms of tissue distribution, expressed in heart, skeletal muscle, kidney, and brain. Expressed in liver (at protein level).

It is found in the mitochondrion matrix. The enzyme catalyses a long-chain 2,3-saturated fatty acyl-CoA + oxidized [electron-transfer flavoprotein] + H(+) = a long-chain (2E)-enoyl-CoA + reduced [electron-transfer flavoprotein]. It catalyses the reaction oxidized [electron-transfer flavoprotein] + hexadecanoyl-CoA + H(+) = (2E)-hexadecenoyl-CoA + reduced [electron-transfer flavoprotein]. The catalysed reaction is hexanoyl-CoA + oxidized [electron-transfer flavoprotein] + H(+) = (2E)-hexenoyl-CoA + reduced [electron-transfer flavoprotein]. It carries out the reaction octanoyl-CoA + oxidized [electron-transfer flavoprotein] + H(+) = (2E)-octenoyl-CoA + reduced [electron-transfer flavoprotein]. The enzyme catalyses decanoyl-CoA + oxidized [electron-transfer flavoprotein] + H(+) = (2E)-decenoyl-CoA + reduced [electron-transfer flavoprotein]. It catalyses the reaction dodecanoyl-CoA + oxidized [electron-transfer flavoprotein] + H(+) = (2E)-dodecenoyl-CoA + reduced [electron-transfer flavoprotein]. The catalysed reaction is tetradecanoyl-CoA + oxidized [electron-transfer flavoprotein] + H(+) = (2E)-tetradecenoyl-CoA + reduced [electron-transfer flavoprotein]. It carries out the reaction octadecanoyl-CoA + oxidized [electron-transfer flavoprotein] + H(+) = (2E)-octadecenoyl-CoA + reduced [electron-transfer flavoprotein]. The enzyme catalyses eicosanoyl-CoA + oxidized [electron-transfer flavoprotein] + H(+) = (2E)-eicosenoyl-CoA + reduced [electron-transfer flavoprotein]. It catalyses the reaction docosanoyl-CoA + oxidized [electron-transfer flavoprotein] + H(+) = (2E)-docosenoyl-CoA + reduced [electron-transfer flavoprotein]. The catalysed reaction is tetracosanoyl-CoA + oxidized [electron-transfer flavoprotein] + H(+) = (2E)-tetracosenoyl-CoA + reduced [electron-transfer flavoprotein]. It carries out the reaction (5E)-tetradecenoyl-CoA + oxidized [electron-transfer flavoprotein] + H(+) = (2E,5E)-tetradecadienoyl-CoA + reduced [electron-transfer flavoprotein]. The enzyme catalyses (5Z)-tetradecenoyl-CoA + oxidized [electron-transfer flavoprotein] + H(+) = (2E,5Z)-tetradecadienoyl-CoA + reduced [electron-transfer flavoprotein]. It catalyses the reaction oxidized [electron-transfer flavoprotein] + (9Z)-octadecenoyl-CoA + H(+) = (2E,9Z)-octadecadienoyl-CoA + reduced [electron-transfer flavoprotein]. It participates in lipid metabolism; mitochondrial fatty acid beta-oxidation. In terms of biological role, long-chain specific acyl-CoA dehydrogenase is one of the acyl-CoA dehydrogenases that catalyze the first step of mitochondrial fatty acid beta-oxidation, an aerobic process breaking down fatty acids into acetyl-CoA and allowing the production of energy from fats. The first step of fatty acid beta-oxidation consists in the removal of one hydrogen from C-2 and C-3 of the straight-chain fatty acyl-CoA thioester, resulting in the formation of trans-2-enoyl-CoA. Among the different mitochondrial acyl-CoA dehydrogenases, long-chain specific acyl-CoA dehydrogenase can act on saturated and unsaturated acyl-CoAs with 6 to 24 carbons with a preference for 8 to 18 carbons long primary chains. In Mus musculus (Mouse), this protein is Long-chain specific acyl-CoA dehydrogenase, mitochondrial.